An 88-amino-acid polypeptide reads, in one-letter code: FXYD domain-containing ion transport regulator 3 (88 aa).

Positions 1-20 (MQEFALSLLVLLAGLPTLDA) are cleaved as a signal peptide. At 21-38 (NDPEDKDSPFYYDWHSLR) the chain is on the extracellular side. The helical transmembrane segment at 39–59 (VGGLICAGILCALGIIVLMSG) threads the bilayer. At 60-88 (KCKCKFSQKPSHRPGDGPPLITPGSAHNC) the chain is on the cytoplasmic side. The interval 66–88 (SQKPSHRPGDGPPLITPGSAHNC) is disordered.

Belongs to the FXYD family. In terms of assembly, regulatory subunit of the sodium/potassium-transporting ATPase which is composed of a catalytic alpha subunit, a non-catalytic beta subunit and an additional regulatory subunit. Interacts with catalytic alpha subunit ATP1A1. Also interacts with non-catalytic beta subunit ATP1B1. Interacts with the alpha1-beta1, alpha2-beta1 and alpha3-beta1 NKA isozymes. Post-translationally, glutathionylated.

It is found in the cell membrane. Its function is as follows. Associates with and regulates the activity of the sodium/potassium-transporting ATPase (NKA) which transports Na(+) out of the cell and K(+) into the cell. Reduces glutathionylation of the NKA beta-1 subunit ATP1B1, thus reversing glutathionylation-mediated inhibition of ATP1B1. Induces a hyperpolarization-activated chloride current when expressed in Xenopus oocytes. In Rattus norvegicus (Rat), this protein is FXYD domain-containing ion transport regulator 3 (Fxyd3).